Consider the following 558-residue polypeptide: Acylase ACY 1 proenzyme (558 aa).

Threonine 368 acts as the Nucleophile in catalysis.

Belongs to the gamma-glutamyltransferase family. As to quaternary structure, dimer of two non-identical chains processed from the same precursor.

It carries out the reaction (7R)-7-(4-carboxybutanamido)cephalosporanate + H2O = (7R)-7-aminocephalosporanate + glutarate. It catalyses the reaction an N-terminal (5-L-glutamyl)-[peptide] + an alpha-amino acid = 5-L-glutamyl amino acid + an N-terminal L-alpha-aminoacyl-[peptide]. The enzyme catalyses glutathione + H2O = L-cysteinylglycine + L-glutamate. The catalysed reaction is an S-substituted glutathione + H2O = an S-substituted L-cysteinylglycine + L-glutamate. In terms of biological role, besides the cephalosporin acylase I activity which converts GL-7ACA into 7-ACA; this enzyme displays some gamma glutamyltranspeptidase activity. This chain is Acylase ACY 1 proenzyme (acyI), found in Pseudomonas sp. (strain V22).